The primary structure comprises 435 residues: Transforming growth factor beta-2 proprotein (435 aa).

Residues 1-20 (MHYCVLSAFLLLHLVTVALS) form the signal peptide. Asn-72, Asn-140, and Asn-241 each carry an N-linked (GlcNAc...) asparagine glycan. Disulfide bonds link Cys-309-Cys-318, Cys-317-Cys-380, Cys-346-Cys-411, and Cys-350-Cys-413.

The protein belongs to the TGF-beta family. Interacts with the serine proteases, HTRA1 and HTRA3. Interacts with ASPN. Interacts with MFAP5. As to quaternary structure, interacts with Transforming growth factor beta-2 (TGF-beta-2) chain; interaction is non-covalent and maintains (TGF-beta-2) in a latent state. Interacts with LRRC32/GARP; leading to regulate activation of TGF-beta-2. Interacts with NREP; the interaction results in a decrease in TGFB2 autoinduction. In terms of assembly, transforming growth factor beta-2: Homodimer; disulfide-linked. Transforming growth factor beta-2: Interacts with TGF-beta receptors (TGFBR1 and TGFBR2), leading to signal transduction. The precursor proprotein is cleaved in the Golgi apparatus to form Transforming growth factor beta-2 (TGF-beta-2) and Latency-associated peptide (LAP) chains, which remain non-covalently linked, rendering TGF-beta-2 inactive.

It localises to the secreted. The protein resides in the extracellular space. It is found in the extracellular matrix. Functionally, precursor of the Latency-associated peptide (LAP) and Transforming growth factor beta-2 (TGF-beta-2) chains, which constitute the regulatory and active subunit of TGF-beta-2, respectively. Its function is as follows. Required to maintain the Transforming growth factor beta-2 (TGF-beta-2) chain in a latent state during storage in extracellular matrix. Associates non-covalently with TGF-beta-2 and regulates its activation via interaction with 'milieu molecules', such as LTBP1 and LRRC32/GARP, that control activation of TGF-beta-2. In terms of biological role, multifunctional protein that regulates various processes such as angiogenesis and heart development. Activation into mature form follows different steps: following cleavage of the proprotein in the Golgi apparatus, Latency-associated peptide (LAP) and Transforming growth factor beta-2 (TGF-beta-2) chains remain non-covalently linked rendering TGF-beta-2 inactive during storage in extracellular matrix. At the same time, LAP chain interacts with 'milieu molecules', such as LTBP1 and LRRC32/GARP, that control activation of TGF-beta-2 and maintain it in a latent state during storage in extracellular milieus. Once activated following release of LAP, TGF-beta-2 acts by binding to TGF-beta receptors (TGFBR1 and TGFBR2), which transduce signal. The sequence is that of Transforming growth factor beta-2 proprotein (TGFB2) from Sus scrofa (Pig).